The following is an 822-amino-acid chain: Tubulin polyglutamylase TTLL6 (822 aa).

Positions 1–24 (MLQCLTSESEEGAEEREESSTEDL) are disordered. A compositionally biased stretch (acidic residues) spans 8 to 24 (ESEEGAEEREESSTEDL). The TTL domain maps to 57–400 (KKRLVINLSN…GNCDKKKVLE (344 aa)). ATP contacts are provided by residues Lys174, 180-181 (QG), 202-205 (QLYI), and 215-217 (KFD). Gln180 is an a protein binding site. Arg241 contacts L-glutamate. 263–264 (TN) is a binding site for ATP. Positions 265, 266, and 283 each coordinate L-glutamate. Residues Asp346, Glu359, and Asn361 each coordinate Mg(2+). Residue His362 coordinates a protein. The interval 371-450 (KLDKEVKDSL…CGGFRLIYPG (80 aa)) is c-MTBD region. Residue Lys377 participates in L-glutamate binding. 2 disordered regions span residues 736 to 772 (PLFP…SVFV) and 791 to 822 (TQAR…TATA). Residues 802-814 (SHSGTTTRDSSTQ) are compositionally biased toward polar residues.

It belongs to the tubulin--tyrosine ligase family. As to quaternary structure, found in a complex with CEP41. Mg(2+) is required as a cofactor. Highly expressed in testis. Expressed in brain, heart, kidney, liver, lung, muscle and trachea. In the brain, specifically expressed in ependymal cilia.

The protein localises to the cytoplasm. It localises to the cytoskeleton. It is found in the cilium axoneme. Its subcellular location is the cilium basal body. The catalysed reaction is L-glutamyl-[protein] + L-glutamate + ATP = gamma-L-glutamyl-L-glutamyl-[protein] + ADP + phosphate + H(+). The enzyme catalyses (L-glutamyl)(n)-gamma-L-glutamyl-L-glutamyl-[protein] + L-glutamate + ATP = (L-glutamyl)(n+1)-gamma-L-glutamyl-L-glutamyl-[protein] + ADP + phosphate + H(+). Its function is as follows. Polyglutamylase which modifies both tubulin and non-tubulin proteins, generating alpha-linked polyglutamate side chains on the gamma-carboxyl group of specific glutamate residues of target proteins. Preferentially mediates ATP-dependent long polyglutamate chain elongation over the initiation step of the polyglutamylation reaction. Preferentially modifies the alpha-tubulin tail over a beta-tail. Promotes tubulin polyglutamylation which stimulates spastin/SPAST-mediated microtubule severing, thereby regulating microtubule functions. Mediates microtubule polyglutamylation in primary cilia axoneme which is important for ciliary structural formation and motility. Mediates microtubule polyglutamylation in motile cilia, necessary for the regulation of ciliary coordinated beating. Polyglutamylates non-tubulin protein nucleotidyltransferase CGAS, leading to CGAS DNA-binding inhibition, thereby preventing antiviral defense response. In Mus musculus (Mouse), this protein is Tubulin polyglutamylase TTLL6.